Reading from the N-terminus, the 300-residue chain is Serine/arginine-rich splicing factor SR34A (300 aa).

The RRM 1 domain occupies 7–82 (RSIYVGNLPG…CRLRVELAHG (76 aa)). 2 disordered regions span residues 81 to 110 (HGGR…GGGG) and 198 to 300 (YESS…EGSV). Residues 94-110 (GYGGGGSGYGGGGGGGG) show a composition bias toward gly residues. One can recognise an RRM 2 domain in the interval 122-200 (FRVIVRGLPS…GFIRVKKYES (79 aa)). The segment covering 203–239 (SRSRSPSRSRSRSRSRSRSRGRGRSHSRSRSLSRSKS) has biased composition (basic residues). Phosphoserine occurs at positions 207, 209, 231, 233, 239, 259, 275, and 285. Over residues 253 to 262 (SRSISKSRSP) the composition is skewed to low complexity. The segment covering 275–287 (SRSKSRSRSRSRS) has biased composition (basic residues).

The protein belongs to the splicing factor SR family. SR subfamily. As to quaternary structure, component of the spliceosome.

It localises to the nucleus speckle. It is found in the nucleus. The protein resides in the nucleoplasm. Probably involved in intron recognition and spliceosome assembly. This is Serine/arginine-rich splicing factor SR34A (SR34A) from Arabidopsis thaliana (Mouse-ear cress).